The following is a 182-amino-acid chain: ADP-ribosylation factor-like protein 3 (182 aa).

Residue Gly2 is the site of N-myristoyl glycine attachment. Phosphoserine is present on Ser5. Residues 24–31 (GLDNAGKT), Thr48, 67–71 (DIGGQ), Gly70, 126–129 (NKQD), and 159–161 (SAL) contribute to the GTP site. Thr31 and Thr48 together coordinate Mg(2+).

The protein belongs to the small GTPase superfamily. Arf family. As to quaternary structure, found in a complex with ARL3, RP2 and UNC119 (or UNC119B); RP2 induces hydrolysis of GTP ARL3 in the complex, leading to the release of UNC119 (or UNC119B). Interacts with RP2; interaction is direct and stimulated with the activated GTP-bound form of ARL3. Interacts with SYS1. Interacts with ARL2BP; the GTP-bound form interacts with ARL2BP. Microtubule-associated protein. Does not interact with TBCC. Interacts with RP2. Interacts with PDE6D; the interaction occurs specifically with the GTP-bound form of ARL3. Interacts with GGA1; the interaction recruits PKD1:PKD2 complex to trans-Golgi network and is required for ciliary targeting of PKD1:PKD2 complex. Interacts with DNAAF9.

The protein localises to the golgi apparatus membrane. The protein resides in the cytoplasm. It localises to the cytoskeleton. It is found in the spindle. Its subcellular location is the nucleus. The protein localises to the microtubule organizing center. The protein resides in the centrosome. It localises to the cell projection. It is found in the cilium. Small GTP-binding protein which cycles between an inactive GDP-bound and an active GTP-bound form, and the rate of cycling is regulated by guanine nucleotide exchange factors (GEF) and GTPase-activating proteins (GAP). Required for normal cytokinesis and cilia signaling. Requires assistance from GTPase-activating proteins (GAPs) like RP2 and PDE6D, in order to cycle between inactive GDP-bound and active GTP-bound forms. Required for targeting proteins to the cilium, including myristoylated NPHP3 and prenylated INPP5E. Targets NPHP3 to the ciliary membrane by releasing myristoylated NPHP3 from UNC119B cargo adapter into the cilium. Required for PKD1:PKD2 complex targeting from the trans-Golgi network to the cilium. This Rattus norvegicus (Rat) protein is ADP-ribosylation factor-like protein 3 (Arl3).